A 95-amino-acid polypeptide reads, in one-letter code: Integration host factor subunit beta (95 aa).

The protein belongs to the bacterial histone-like protein family. As to quaternary structure, heterodimer of an alpha and a beta chain.

This protein is one of the two subunits of integration host factor, a specific DNA-binding protein that functions in genetic recombination as well as in transcriptional and translational control. The protein is Integration host factor subunit beta of Colwellia psychrerythraea (strain 34H / ATCC BAA-681) (Vibrio psychroerythus).